The sequence spans 1583 residues: Pentafunctional AROM polypeptide (1583 aa).

The tract at residues 1 to 384 is 3-dehydroquinate synthase; that stretch reads MSNPTKISIL…YETRASVVAN (384 aa). Residues 44–46, 81–84, 114–116, and aspartate 119 each bind NAD(+); these read DTN, EVSK, and GGV. Arginine 130 is a 7-phospho-2-dehydro-3-deoxy-D-arabino-heptonate binding site. Residue 139-140 participates in NAD(+) binding; that stretch reads TT. The 7-phospho-2-dehydro-3-deoxy-D-arabino-heptonate site is built by aspartate 146 and lysine 152. Lysine 161 lines the NAD(+) pocket. Residue asparagine 162 coordinates 7-phospho-2-dehydro-3-deoxy-D-arabino-heptonate. NAD(+)-binding positions include 179-182 and asparagine 190; that span reads FLET. Glutamate 194 lines the Zn(2+) pocket. Residues 194-197 and lysine 250 contribute to the 7-phospho-2-dehydro-3-deoxy-D-arabino-heptonate site; that span reads EVIK. The active-site Proton acceptor; for 3-dehydroquinate synthase activity is glutamate 260. Residues 264-268 and histidine 271 each bind 7-phospho-2-dehydro-3-deoxy-D-arabino-heptonate; that span reads RNLLN. A Zn(2+)-binding site is contributed by histidine 271. Histidine 275 functions as the Proton acceptor; for 3-dehydroquinate synthase activity in the catalytic mechanism. 7-phospho-2-dehydro-3-deoxy-D-arabino-heptonate is bound by residues histidine 287 and lysine 356. Histidine 287 provides a ligand contact to Zn(2+). An EPSP synthase region spans residues 397–842; that stretch reads VHPGVAQSSN…WDTLRQLFKV (446 aa). Cysteine 824 functions as the For EPSP synthase activity in the catalytic mechanism. Residues 863 to 1055 are shikimate kinase; that stretch reads NASIYIIGMR…KEKEHSFFAS (193 aa). 870–877 is an ATP binding site; it reads GMRGAGKS. Residues 1056 to 1276 are 3-dehydroquinase; the sequence is LTLPDLREAG…AAPGQLSATE (221 aa). Residue histidine 1179 is the Proton acceptor; for 3-dehydroquinate dehydratase activity of the active site. Catalysis depends on lysine 1207, which acts as the Schiff-base intermediate with substrate; for 3-dehydroquinate dehydratase activity. The shikimate dehydrogenase stretch occupies residues 1289-1583; it reads PKKFAIFGSP…SARACSSPLI (295 aa).

This sequence in the N-terminal section; belongs to the sugar phosphate cyclases superfamily. Dehydroquinate synthase family. In the 2nd section; belongs to the EPSP synthase family. The protein in the 3rd section; belongs to the shikimate kinase family. It in the 4th section; belongs to the type-I 3-dehydroquinase family. This sequence in the C-terminal section; belongs to the shikimate dehydrogenase family. Homodimer. It depends on Zn(2+) as a cofactor.

It localises to the cytoplasm. It catalyses the reaction 7-phospho-2-dehydro-3-deoxy-D-arabino-heptonate = 3-dehydroquinate + phosphate. It carries out the reaction 3-dehydroquinate = 3-dehydroshikimate + H2O. The enzyme catalyses shikimate + NADP(+) = 3-dehydroshikimate + NADPH + H(+). The catalysed reaction is shikimate + ATP = 3-phosphoshikimate + ADP + H(+). It catalyses the reaction 3-phosphoshikimate + phosphoenolpyruvate = 5-O-(1-carboxyvinyl)-3-phosphoshikimate + phosphate. It participates in metabolic intermediate biosynthesis; chorismate biosynthesis; chorismate from D-erythrose 4-phosphate and phosphoenolpyruvate: step 2/7. The protein operates within metabolic intermediate biosynthesis; chorismate biosynthesis; chorismate from D-erythrose 4-phosphate and phosphoenolpyruvate: step 3/7. It functions in the pathway metabolic intermediate biosynthesis; chorismate biosynthesis; chorismate from D-erythrose 4-phosphate and phosphoenolpyruvate: step 4/7. Its pathway is metabolic intermediate biosynthesis; chorismate biosynthesis; chorismate from D-erythrose 4-phosphate and phosphoenolpyruvate: step 5/7. It participates in metabolic intermediate biosynthesis; chorismate biosynthesis; chorismate from D-erythrose 4-phosphate and phosphoenolpyruvate: step 6/7. In terms of biological role, the AROM polypeptide catalyzes 5 consecutive enzymatic reactions in prechorismate polyaromatic amino acid biosynthesis. This Emericella nidulans (strain FGSC A4 / ATCC 38163 / CBS 112.46 / NRRL 194 / M139) (Aspergillus nidulans) protein is Pentafunctional AROM polypeptide (aromA).